Here is an 86-residue protein sequence, read N- to C-terminus: YcgL domain-containing protein XC_4086 (86 aa).

In terms of domain architecture, YcgL spans 1–83 (MHAYVYKSQR…PKTVVLAGEC (83 aa)).

The chain is YcgL domain-containing protein XC_4086 from Xanthomonas campestris pv. campestris (strain 8004).